The following is a 381-amino-acid chain: Subtilisin J (381 aa).

Residues 1–29 (MRSKKLWISLLFALTLIFTMAFSNMSVQA) form the signal peptide. Residues 30-106 (AGKSSTEKKY…VEEDHIAHEY (77 aa)) constitute a propeptide that is removed on maturation. One can recognise an Inhibitor I9 domain in the interval 38–103 (KYIVGFKQTM…VAYVEEDHIA (66 aa)). Gln108 is a binding site for Ca(2+). One can recognise a Peptidase S8 domain in the interval 111–380 (PYGISQIKAP…KGLINVQAAA (270 aa)). Residue Asp138 is the Charge relay system of the active site. Asp147 is a binding site for Ca(2+). His170 serves as the catalytic Charge relay system. Residues Leu181, Asn183, Ile185, Val187, Ala275, Tyr277, and Thr280 each contribute to the Ca(2+) site. The Charge relay system role is filled by Ser327.

This sequence belongs to the peptidase S8 family. It depends on Ca(2+) as a cofactor.

It localises to the secreted. It catalyses the reaction Hydrolysis of proteins with broad specificity for peptide bonds, and a preference for a large uncharged residue in P1. Hydrolyzes peptide amides.. In terms of biological role, subtilisin is an extracellular alkaline serine protease, it catalyzes the hydrolysis of proteins and peptide amides. In Geobacillus stearothermophilus (Bacillus stearothermophilus), this protein is Subtilisin J (aprJ).